The sequence spans 234 residues: 1-(5-phosphoribosyl)-5-[(5-phosphoribosylamino)methylideneamino] imidazole-4-carboxamide isomerase (234 aa).

The active-site Proton acceptor is Asp-9. Residue Asp-131 is the Proton donor of the active site.

This sequence belongs to the HisA/HisF family.

The protein resides in the cytoplasm. The catalysed reaction is 1-(5-phospho-beta-D-ribosyl)-5-[(5-phospho-beta-D-ribosylamino)methylideneamino]imidazole-4-carboxamide = 5-[(5-phospho-1-deoxy-D-ribulos-1-ylimino)methylamino]-1-(5-phospho-beta-D-ribosyl)imidazole-4-carboxamide. The protein operates within amino-acid biosynthesis; L-histidine biosynthesis; L-histidine from 5-phospho-alpha-D-ribose 1-diphosphate: step 4/9. This chain is 1-(5-phosphoribosyl)-5-[(5-phosphoribosylamino)methylideneamino] imidazole-4-carboxamide isomerase, found in Staphylococcus aureus (strain MRSA252).